A 61-amino-acid chain; its full sequence is Early 3 Conserved Region 1-alpha protein (61 aa).

Topologically, residues 1–14 are lumenal; sequence MSNSSNSTSLSNFS. 3 N-linked (GlcNAc...) asparagine; by host glycosylation sites follow: Asn3, Asn6, and Asn12. Residues 15–35 form a helical membrane-spanning segment; sequence GIGVGVILTLVILFILILALL. At 36-61 the chain is on the cytoplasmic side; the sequence is CLRVAACCTHVCTYCQLFKRWGQHPR.

It belongs to the adenoviridae E3-CR1 family. Interacts with E3 RID alpha and E3 RID beta. Only 1 of 3 three potential glycosylation sites is glycosylated. Oligosaccharides are not processed from high mannose to the complex type because the protein is retained in the endoplasmic reticulum.

It localises to the host endoplasmic reticulum membrane. It is found in the host cell membrane. In terms of biological role, prevents infected cell apoptosis induced by the host immune system. May act by down-regulating host TRAIL receptors. May act in complex with E3 RID alpha and beta. May play a role on cellular apoptosis regulation in the ER. In Human adenovirus C serotype 2 (HAdV-2), this protein is Early 3 Conserved Region 1-alpha protein.